We begin with the raw amino-acid sequence, 545 residues long: Chaperonin GroEL 2 (545 aa).

ATP-binding positions include 29–32 (TLGP), 86–90 (DGTTT), glycine 413, 479–481 (NAA), and aspartate 495.

This sequence belongs to the chaperonin (HSP60) family. In terms of assembly, forms a cylinder of 14 subunits composed of two heptameric rings stacked back-to-back. Interacts with the co-chaperonin GroES.

It localises to the cytoplasm. It carries out the reaction ATP + H2O + a folded polypeptide = ADP + phosphate + an unfolded polypeptide.. In terms of biological role, together with its co-chaperonin GroES, plays an essential role in assisting protein folding. The GroEL-GroES system forms a nano-cage that allows encapsulation of the non-native substrate proteins and provides a physical environment optimized to promote and accelerate protein folding. The chain is Chaperonin GroEL 2 from Prochlorococcus marinus (strain AS9601).